A 306-amino-acid polypeptide reads, in one-letter code: Tryptophan 2,3-dioxygenase (306 aa).

Substrate contacts are provided by residues 75–79 (FIIQH), Tyr137, and Arg141. His264 contacts heme. Substrate is bound at residue Thr278.

It belongs to the tryptophan 2,3-dioxygenase family. As to quaternary structure, homotetramer. It depends on heme as a cofactor.

It carries out the reaction L-tryptophan + O2 = N-formyl-L-kynurenine. It participates in amino-acid degradation; L-tryptophan degradation via kynurenine pathway; L-kynurenine from L-tryptophan: step 1/2. Functionally, heme-dependent dioxygenase that catalyzes the oxidative cleavage of the L-tryptophan (L-Trp) pyrrole ring and converts L-tryptophan to N-formyl-L-kynurenine. Catalyzes the oxidative cleavage of the indole moiety. The polypeptide is Tryptophan 2,3-dioxygenase (Paraburkholderia phytofirmans (strain DSM 17436 / LMG 22146 / PsJN) (Burkholderia phytofirmans)).